The chain runs to 284 residues: Bifunctional protein FolD (284 aa).

166-168 contributes to the NADP(+) binding site; it reads GAS.

This sequence belongs to the tetrahydrofolate dehydrogenase/cyclohydrolase family. As to quaternary structure, homodimer.

The enzyme catalyses (6R)-5,10-methylene-5,6,7,8-tetrahydrofolate + NADP(+) = (6R)-5,10-methenyltetrahydrofolate + NADPH. It carries out the reaction (6R)-5,10-methenyltetrahydrofolate + H2O = (6R)-10-formyltetrahydrofolate + H(+). It functions in the pathway one-carbon metabolism; tetrahydrofolate interconversion. Functionally, catalyzes the oxidation of 5,10-methylenetetrahydrofolate to 5,10-methenyltetrahydrofolate and then the hydrolysis of 5,10-methenyltetrahydrofolate to 10-formyltetrahydrofolate. The protein is Bifunctional protein FolD of Legionella pneumophila subsp. pneumophila (strain Philadelphia 1 / ATCC 33152 / DSM 7513).